A 611-amino-acid polypeptide reads, in one-letter code: MNKIRFLDKYLVQKIAAGESIDRPCSILRELLDNSIDSGATKIEVFLEEGGIHKILIIDNGIGIGKEDLKICYLPHTTSKISSEEDLRKIETLGFRGEALSSIAICSNISITSSTTGNESYQIEVENGIEKCFKKQPAINGTIVNVTKIFHNFPARKRFLKQEPIETKMCLKVLEEKIITHPEINFEINLNQKLRKIYFKESLIDRVQNVYGNVIENNKFKVLKKEHENIKIELFLAPANFSKKSKRHIKTFVNRRPIDQKDLLEAITNGHSRIISPGNFPICYLFLEINPEYIDFNVHPQKKEVRFFNLPFLFKLISDNINNFFDKDINSYNEIVIKRQLTDDDNLIEMINQPKNLNKTNTYDIIQNKNLETEHTVNDLSKNIIQNDIGLRRYNSIIQNRPSFKENITNIFSDKFLEFEEPPNKNEKEEIKFNYIGQIFSEFLIVEKVNEIYFIDQHAVHEKIIYEKLRNSKKTVQKLLIPIEFTIVDKNIEEIIDSEIEEYKKMDIIISKIGPKKYQLESIPNICNQYENTLINFFQSRKSRTINSLESDLYANIACRKAVKTNDILSLEFSKFLIDEFFKLEIKHCPHGRKIYYKISKFELEKKVARA.

Belongs to the DNA mismatch repair MutL/HexB family.

Its function is as follows. This protein is involved in the repair of mismatches in DNA. It is required for dam-dependent methyl-directed DNA mismatch repair. May act as a 'molecular matchmaker', a protein that promotes the formation of a stable complex between two or more DNA-binding proteins in an ATP-dependent manner without itself being part of a final effector complex. The sequence is that of DNA mismatch repair protein MutL from Borrelia garinii subsp. bavariensis (strain ATCC BAA-2496 / DSM 23469 / PBi) (Borreliella bavariensis).